The primary structure comprises 426 residues: Histidinol dehydrogenase (426 aa).

Tyr-130, Gln-187, and Asn-210 together coordinate NAD(+). Substrate-binding residues include Ser-233, Gln-255, and His-258. 2 residues coordinate Zn(2+): Gln-255 and His-258. Active-site proton acceptor residues include Glu-323 and His-324. Substrate contacts are provided by His-324, Asp-357, Glu-411, and His-416. Asp-357 is a binding site for Zn(2+). Position 416 (His-416) interacts with Zn(2+).

This sequence belongs to the histidinol dehydrogenase family. Zn(2+) serves as cofactor.

The catalysed reaction is L-histidinol + 2 NAD(+) + H2O = L-histidine + 2 NADH + 3 H(+). It participates in amino-acid biosynthesis; L-histidine biosynthesis; L-histidine from 5-phospho-alpha-D-ribose 1-diphosphate: step 9/9. Functionally, catalyzes the sequential NAD-dependent oxidations of L-histidinol to L-histidinaldehyde and then to L-histidine. The chain is Histidinol dehydrogenase (hisD) from Aquifex aeolicus (strain VF5).